The sequence spans 320 residues: Cytochrome f (320 aa).

A signal peptide spans 1-35; that stretch reads MQTRNAFSWIKKEITRSISVLLMIYIITRAPISNA. Heme contacts are provided by Tyr36, Cys56, Cys59, and His60. The chain crosses the membrane as a helical span at residues 286 to 305; the sequence is VQGLLLFLASIILAQIFLVL.

This sequence belongs to the cytochrome f family. The 4 large subunits of the cytochrome b6-f complex are cytochrome b6, subunit IV (17 kDa polypeptide, petD), cytochrome f and the Rieske protein, while the 4 small subunits are PetG, PetL, PetM and PetN. The complex functions as a dimer. Heme is required as a cofactor.

The protein localises to the plastid. It localises to the chloroplast thylakoid membrane. In terms of biological role, component of the cytochrome b6-f complex, which mediates electron transfer between photosystem II (PSII) and photosystem I (PSI), cyclic electron flow around PSI, and state transitions. The protein is Cytochrome f (petA) of Vicia faba (Broad bean).